Reading from the N-terminus, the 667-residue chain is E3 ubiquitin-protein ligase Midline-1 (667 aa).

The RING-type zinc finger occupies 10-60 (CPICLELLEDPLLLPCAHSLCFNCAHRILVSHCATNEPVESINAFQCPTCR). Phosphoserine is present on residues Ser92 and Ser96. 2 consecutive B box-type zinc fingers follow at residues 116-165 (KVLC…IEPI) and 172-212 (GLMC…VAAL). Cys119, Cys122, Cys134, Cys137, Cys142, Cys145, His150, His159, Cys175, His178, Cys198, and His204 together coordinate Zn(2+). A coiled-coil region spans residues 205-264 (RDHQVAALSERYDKLKQNLESNLTNLIKRNTELETLLAKLIQTCQHVEVNASRQEAKLTE). A COS domain is found at 320-379 (LKENDHARFLQTAKNITERVSMATASSQVLIPEINLNDTFDTFALDFSREKKLLECLDYL). A Fibronectin type-III domain is found at 381–484 (APNPPTIREE…EPGKLKTNSQ (104 aa)). Residues 471-485 (SRSSEPGKLKTNSQP) are compositionally biased toward polar residues. Positions 471–524 (SRSSEPGKLKTNSQPFKLDPKSAHRKLKVSHDNLTVERDESSSKKSHTPERFTS) are disordered. Positions 482-659 (NSQPFKLDPK…IITGLPIPDH (178 aa)) constitute a B30.2/SPRY domain. Over residues 499 to 520 (VSHDNLTVERDESSSKKSHTPE) the composition is skewed to basic and acidic residues. Residue Ser511 is modified to Phosphoserine.

It belongs to the TRIM/RBCC family. In terms of assembly, homodimer or heterodimer with MID2. Interacts with IGBP1.

It is found in the cytoplasm. The protein localises to the cytoskeleton. The catalysed reaction is S-ubiquitinyl-[E2 ubiquitin-conjugating enzyme]-L-cysteine + [acceptor protein]-L-lysine = [E2 ubiquitin-conjugating enzyme]-L-cysteine + N(6)-ubiquitinyl-[acceptor protein]-L-lysine.. Functionally, has E3 ubiquitin ligase activity towards IGBP1, promoting its monoubiquitination, which results in deprotection of the catalytic subunit of protein phosphatase PP2A, and its subsequent degradation by polyubiquitination. This chain is E3 ubiquitin-protein ligase Midline-1 (Mid1), found in Mus spretus (Western Mediterranean mouse).